The following is a 778-amino-acid chain: Endonuclease MutS2 (778 aa).

328-335 is a binding site for ATP; sequence GPNTGGKT. A Smr domain is found at 703-778; it reads LDLRGKRYEE…GSGCTIANLG (76 aa).

This sequence belongs to the DNA mismatch repair MutS family. MutS2 subfamily. In terms of assembly, homodimer. Binds to stalled ribosomes, contacting rRNA.

In terms of biological role, endonuclease that is involved in the suppression of homologous recombination and thus may have a key role in the control of bacterial genetic diversity. Its function is as follows. Acts as a ribosome collision sensor, splitting the ribosome into its 2 subunits. Detects stalled/collided 70S ribosomes which it binds and splits by an ATP-hydrolysis driven conformational change. Acts upstream of the ribosome quality control system (RQC), a ribosome-associated complex that mediates the extraction of incompletely synthesized nascent chains from stalled ribosomes and their subsequent degradation. Probably generates substrates for RQC. This Streptococcus equi subsp. zooepidemicus (strain H70) protein is Endonuclease MutS2.